The chain runs to 202 residues: FMN-dependent NADH:quinone oxidoreductase (202 aa).

Residues S9 and 95–98 (MYNF) each bind FMN.

It belongs to the azoreductase type 1 family. As to quaternary structure, homodimer. Requires FMN as cofactor.

It catalyses the reaction 2 a quinone + NADH + H(+) = 2 a 1,4-benzosemiquinone + NAD(+). It carries out the reaction N,N-dimethyl-1,4-phenylenediamine + anthranilate + 2 NAD(+) = 2-(4-dimethylaminophenyl)diazenylbenzoate + 2 NADH + 2 H(+). Its function is as follows. Quinone reductase that provides resistance to thiol-specific stress caused by electrophilic quinones. In terms of biological role, also exhibits azoreductase activity. Catalyzes the reductive cleavage of the azo bond in aromatic azo compounds to the corresponding amines. This is FMN-dependent NADH:quinone oxidoreductase from Chromobacterium violaceum (strain ATCC 12472 / DSM 30191 / JCM 1249 / CCUG 213 / NBRC 12614 / NCIMB 9131 / NCTC 9757 / MK).